Here is a 400-residue protein sequence, read N- to C-terminus: NADH-quinone oxidoreductase subunit D (400 aa).

The protein belongs to the complex I 49 kDa subunit family. NDH-1 is composed of 14 different subunits. Subunits NuoB, C, D, E, F, and G constitute the peripheral sector of the complex.

The protein resides in the cell inner membrane. The enzyme catalyses a quinone + NADH + 5 H(+)(in) = a quinol + NAD(+) + 4 H(+)(out). In terms of biological role, NDH-1 shuttles electrons from NADH, via FMN and iron-sulfur (Fe-S) centers, to quinones in the respiratory chain. The immediate electron acceptor for the enzyme in this species is believed to be a menaquinone. Couples the redox reaction to proton translocation (for every two electrons transferred, four hydrogen ions are translocated across the cytoplasmic membrane), and thus conserves the redox energy in a proton gradient. This Chlorobium chlorochromatii (strain CaD3) protein is NADH-quinone oxidoreductase subunit D.